The primary structure comprises 408 residues: LL-diaminopimelate aminotransferase (408 aa).

Substrate is bound by residues tyrosine 15 and glycine 42. Residues tyrosine 72, 108–109, tyrosine 132, asparagine 187, tyrosine 218, and 246–248 each bind pyridoxal 5'-phosphate; these read SK and SFS. Residues lysine 109, tyrosine 132, and asparagine 187 each coordinate substrate. Residue lysine 249 is modified to N6-(pyridoxal phosphate)lysine. Pyridoxal 5'-phosphate-binding residues include arginine 257 and asparagine 291. Substrate contacts are provided by asparagine 291 and arginine 387.

Belongs to the class-I pyridoxal-phosphate-dependent aminotransferase family. LL-diaminopimelate aminotransferase subfamily. Homodimer. It depends on pyridoxal 5'-phosphate as a cofactor.

It catalyses the reaction (2S,6S)-2,6-diaminopimelate + 2-oxoglutarate = (S)-2,3,4,5-tetrahydrodipicolinate + L-glutamate + H2O + H(+). It functions in the pathway amino-acid biosynthesis; L-lysine biosynthesis via DAP pathway; LL-2,6-diaminopimelate from (S)-tetrahydrodipicolinate (aminotransferase route): step 1/1. Its function is as follows. Involved in the synthesis of meso-diaminopimelate (m-DAP or DL-DAP), required for both lysine and peptidoglycan biosynthesis. Catalyzes the direct conversion of tetrahydrodipicolinate to LL-diaminopimelate. This Prochlorococcus marinus (strain NATL1A) protein is LL-diaminopimelate aminotransferase.